We begin with the raw amino-acid sequence, 841 residues long: SLIT and NTRK-like protein 6 (841 aa).

An N-terminal signal peptide occupies residues 1 to 26 (MKLWIHLFYSSLLACISLHSQTPVLS). Positions 27-67 (SRGSCDSLCNCEEKDGTMLINCEAKGIKMVSEISVPPSRPF) constitute an LRRNT 1 domain. The Extracellular portion of the chain corresponds to 27 to 608 (SRGSCDSLCN…RSLTDAVPLS (582 aa)). 5 LRR repeats span residues 89 to 110 (NAISIHLGFNNIADIEIGAFNG), 113 to 134 (LLKQLHINHNSLEILKEDTFHG), 137 to 158 (NLEFLQADNNFITVIEPSAFSK), 161 to 182 (RLKVLILNDNAIESLPPNIFRF), and 184 to 205 (PLTHLDLRGNQLQTLPYVGFLE). Residues 218 to 269 (NKWACNCDLLQLKTWLENMPPQSIIGDVVCNSPPFFKGSILSRLKKESICPT) form the LRRCT 1 domain. The LRRNT 2 domain occupies 320 to 361 (PSTQLPGPYCPIPCNCKVLSPSGLLIHCQERNIESLSDLRPP). LRR repeat units follow at residues 364–385 (NPRKLILAGNIIHSLMKSDLVE), 388–409 (TLEMLHLGNNRIEVLEEGSFMN), 412–433 (RLQKLYLNGNHLTKLSKGMFLG), 436–457 (NLEYLYLEYNAIKEILPGTFNP), 460–481 (KLKVLYLNNNLLQVLPPHIFSG), and 483–504 (PLTKVNLKTNQFTHLPVSNILD). The LRRCT 2 domain occupies 517-568 (NPWDCSCDLVGLQQWIQKLSKNTVTDDILCTSPGHLDKKELKALNSEILCPG). Residues 609 to 629 (VLILGLLIMFITIVFCAAGIV) form a helical membrane-spanning segment. Residues 630–841 (VLVLHRRRRY…DYLEVLEQQT (212 aa)) lie on the Cytoplasmic side of the membrane.

Belongs to the SLITRK family. In terms of tissue distribution, in adult brain, highly expressed in putamen with no expression in cerebral cortex. Expressed in adult and fetal lung and fetal liver. Also expressed at high levels in some brain tumors including medulloblastomas and primitive neuroectodermal tumors.

The protein localises to the cell membrane. Regulator of neurite outgrowth required for normal hearing and vision. The sequence is that of SLIT and NTRK-like protein 6 (SLITRK6) from Homo sapiens (Human).